Reading from the N-terminus, the 94-residue chain is Pyrimidine/purine nucleoside phosphorylase (94 aa).

The protein belongs to the nucleoside phosphorylase PpnP family.

The enzyme catalyses a purine D-ribonucleoside + phosphate = a purine nucleobase + alpha-D-ribose 1-phosphate. The catalysed reaction is adenosine + phosphate = alpha-D-ribose 1-phosphate + adenine. It carries out the reaction cytidine + phosphate = cytosine + alpha-D-ribose 1-phosphate. It catalyses the reaction guanosine + phosphate = alpha-D-ribose 1-phosphate + guanine. The enzyme catalyses inosine + phosphate = alpha-D-ribose 1-phosphate + hypoxanthine. The catalysed reaction is thymidine + phosphate = 2-deoxy-alpha-D-ribose 1-phosphate + thymine. It carries out the reaction uridine + phosphate = alpha-D-ribose 1-phosphate + uracil. It catalyses the reaction xanthosine + phosphate = alpha-D-ribose 1-phosphate + xanthine. Its function is as follows. Catalyzes the phosphorolysis of diverse nucleosides, yielding D-ribose 1-phosphate and the respective free bases. Can use uridine, adenosine, guanosine, cytidine, thymidine, inosine and xanthosine as substrates. Also catalyzes the reverse reactions. The protein is Pyrimidine/purine nucleoside phosphorylase of Cronobacter sakazakii (strain ATCC BAA-894) (Enterobacter sakazakii).